The primary structure comprises 568 residues: Keratin, type I cytoskeletal 10 (568 aa).

Low complexity predominate over residues 1 to 15 (MSVRYSSSKQYSSSR). The interval 1-31 (MSVRYSSSKQYSSSRSGGGGGGGGGSSFRIS) is disordered. The segment at 1 to 135 (MSVRYSSSKQ…GGDGGLLSGN (135 aa)) is head. S14, S16, S36, S47, S50, and S160 each carry phosphoserine. A compositionally biased stretch (gly residues) spans 16–26 (SGGGGGGGGGS). The coil 1A stretch occupies residues 136–171 (EKVTMQNLNDRLASYLDKVRALEESNYELEGKIKEW). One can recognise an IF rod domain in the interval 136-450 (EKVTMQNLND…SLLEGEGSSG (315 aa)). The tract at residues 172–192 (YEKHGNSSQRAPRDYSKYYQT) is linker 1. Residues 193 to 284 (IEDLKNQILN…KNHEEEMRDL (92 aa)) are coil 1B. Positions 285–307 (QNVSTGDVNVEMNAAPGVDLTEL) are linker 12. A coil 2 region spans residues 308 to 446 (LNNMRNQYEQ…QTYRSLLEGE (139 aa)). A tail region spans residues 447–568 (GSSGGGGYGG…GESSSKGPRY (122 aa)). The segment covering 485-546 (GGGSSGGGGH…GGGYGGGSSS (62 aa)) has biased composition (gly residues). A disordered region spans residues 485–568 (GGGSSGGGGH…GESSSKGPRY (84 aa)). The segment covering 547-568 (SGGHKSSSSGSVGESSSKGPRY) has biased composition (low complexity).

It belongs to the intermediate filament family. In terms of assembly, heterotetramer of two type I and two type II keratins. Heterodimer with KRT1. Two heterodimers of KRT1 and KRT10 form a heterotetramer. The KRT10 subunit in the heterotetramer is probably disulfide-linked. In terms of tissue distribution, expressed in skin.

Its subcellular location is the secreted. The protein resides in the extracellular space. It localises to the cell surface. It is found in the cytoplasm. Functionally, plays a role in the establishment of the epidermal barrier on plantar skin. Involved in the maintenance of cell layer development and keratin filament bundles in suprabasal cells of the epithelium. This is Keratin, type I cytoskeletal 10 from Canis lupus familiaris (Dog).